Reading from the N-terminus, the 487-residue chain is Cobyric acid synthase (487 aa).

The GATase cobBQ-type domain occupies 249–435 (GIDIAIVRLP…IHGIFDEGDF (187 aa)). Cys-330 functions as the Nucleophile in the catalytic mechanism. The active site involves His-427.

Belongs to the CobB/CobQ family. CobQ subfamily.

Its pathway is cofactor biosynthesis; adenosylcobalamin biosynthesis. Catalyzes amidations at positions B, D, E, and G on adenosylcobyrinic A,C-diamide. NH(2) groups are provided by glutamine, and one molecule of ATP is hydrogenolyzed for each amidation. In Clostridium perfringens (strain SM101 / Type A), this protein is Cobyric acid synthase.